Reading from the N-terminus, the 514-residue chain is MSLTEEIKKRRTFAIISHPDAGKTTITEQLLYFGGEIREAGTVKGKKSGTFAKSDWMDIEKQRGISVTSSVMQFDYAGKRVNILDTPGHEDFSEDTYRTLMAVDAAVMVVDSAKGIEAQTKKLFEVVKHRNIPVFTFINKLDRDGREPLELLEELEEVLGIASYPMNWPIGMGRAFEGLYDLHNKRLELYKGDERFASIEDGDQLFTNNPFYEQVKEDIELLQEAGNDFSEQAILDGDLTPVFFGSALTNFGVQTFLDTFLEFAPEPHGHKTTEGNVVDPLAKDFSGFVFKIQANMDPKHRDRIAFVRIVSGEFERGMGVNLTRTGKGAKLSNVTQFMAESRENVTNAVAGDIIGVYDTGTYQVGDTLTVGKNKFEFEPLPTFTPEIFMKVSPKNVMKQKSFHKGIEQLVQEGAIQLYKNYQTGEYMLGAVGQLQFEVFKHRMEGEYNAEVVMTPMGKKTVRWISEDDLDQRMSSSRNILAKDRFDQPVFLFENDFALRWFADKYPDVTLEEKM.

The 261-residue stretch at 8–268 folds into the tr-type G domain; it reads KKRRTFAIIS…TFLEFAPEPH (261 aa). GTP-binding positions include 17–24, 85–89, and 139–142; these read SHPDAGKT, DTPGH, and NKLD.

It belongs to the TRAFAC class translation factor GTPase superfamily. Classic translation factor GTPase family. PrfC subfamily.

It is found in the cytoplasm. Its function is as follows. Increases the formation of ribosomal termination complexes and stimulates activities of RF-1 and RF-2. It binds guanine nucleotides and has strong preference for UGA stop codons. It may interact directly with the ribosome. The stimulation of RF-1 and RF-2 is significantly reduced by GTP and GDP, but not by GMP. The chain is Peptide chain release factor 3 from Streptococcus pyogenes serotype M5 (strain Manfredo).